The primary structure comprises 131 residues: D-ribose pyranase (131 aa).

The active-site Proton donor is the His20. Substrate contacts are provided by residues Asp28, His98, and 120–122 (YSN).

Belongs to the RbsD / FucU family. RbsD subfamily. Homodecamer.

It localises to the cytoplasm. It carries out the reaction beta-D-ribopyranose = beta-D-ribofuranose. It participates in carbohydrate metabolism; D-ribose degradation; D-ribose 5-phosphate from beta-D-ribopyranose: step 1/2. Catalyzes the interconversion of beta-pyran and beta-furan forms of D-ribose. This is D-ribose pyranase from Limosilactobacillus reuteri (strain DSM 20016) (Lactobacillus reuteri).